A 73-amino-acid polypeptide reads, in one-letter code: Large ribosomal subunit protein bL31 (73 aa).

Zn(2+) is bound by residues cysteine 16, cysteine 18, cysteine 36, and cysteine 39.

It belongs to the bacterial ribosomal protein bL31 family. Type A subfamily. Part of the 50S ribosomal subunit. It depends on Zn(2+) as a cofactor.

Functionally, binds the 23S rRNA. The chain is Large ribosomal subunit protein bL31 from Desulfotalea psychrophila (strain LSv54 / DSM 12343).